The primary structure comprises 128 residues: Nucleoside diphosphate kinase B (128 aa).

Methionine 1 is modified (N-acetylmethionine). Lysine 9, phenylalanine 39, threonine 70, arginine 81, and asparagine 91 together coordinate ATP. Histidine 94 (pros-phosphohistidine intermediate) is an active-site residue.

Belongs to the NDK family. Requires Mg(2+) as cofactor.

The protein resides in the cytoplasm. It localises to the nucleus. It is found in the cell projection. Its subcellular location is the lamellipodium. The protein localises to the ruffle. The catalysed reaction is a 2'-deoxyribonucleoside 5'-diphosphate + ATP = a 2'-deoxyribonucleoside 5'-triphosphate + ADP. It catalyses the reaction a ribonucleoside 5'-diphosphate + ATP = a ribonucleoside 5'-triphosphate + ADP. In terms of biological role, major role in the synthesis of nucleoside triphosphates other than ATP. The sequence is that of Nucleoside diphosphate kinase B (nme2) from Merluccius bilinearis (Silver hake).